A 93-amino-acid polypeptide reads, in one-letter code: Small ribosomal subunit protein bS20 (93 aa).

The segment covering 1 to 18 has biased composition (basic and acidic residues); that stretch reads MPLHKSAEKRLRQSEKRN. Residues 1-25 form a disordered region; it reads MPLHKSAEKRLRQSEKRNARNRARK.

This sequence belongs to the bacterial ribosomal protein bS20 family.

Its function is as follows. Binds directly to 16S ribosomal RNA. In Chlorobium chlorochromatii (strain CaD3), this protein is Small ribosomal subunit protein bS20.